The chain runs to 630 residues: MKALLSLLTAVAVATATPLDLSLRALPNAPDGYTPAKVSCPATRPSIRGAGSLSPNETSWLEIRRKNTVQPMTDLLGRLNLGFDAAGYIDRVSSNASNLPNIAIAVSGGGYRALTNGAGAIKAFDSRTQGSTQSGHLGGLLQSATYVSGLSGGGWLVGSVYLNNFTTIADLQSGDHGNVWQFSTSILEGPKAKHLQFLSTADYWKDLLKAVDGKSDAGFNTSLTDYWGRALSYQFINDRTGNGGLSYTWSSIALTDPFRRGEMPLPILVADGRNPGELLIGSNSTVYEFNPWEFGSFDPSIFGFAPLEYLGSRFDNGQLPRGEPCVRGFDNAGFVMGTSSSLFNQFILRLNKTDLPDLAKDVFSKILTAIGRDGDDIAVYGPNPFYGYRNSTAAYSRSRELDVVDGGEDGQNIPLHPLIQPVRHVDVIFAVDSSADGPYSWPNGSALVATYERSLNSSGIGNGTVFPAVPDVNTFVNLGLNTRPTFFGCDPANLSAPAPLVVYLPNAPYSTHSNTSTFQLAYSDSERDEIITNGYNVVTRGNATVDKSWPSCVGCAILQRSMYRTNTSMPAVCNSCFKEYCWNGTVDSKTPRTYEPTLLLGSTSTNAAYTQGVTWLVGILAVGVAMGMTA.

Positions 1–16 (MKALLSLLTAVAVATA) are cleaved as a signal peptide. Residues 39-587 (SCPATRPSIR…KEYCWNGTVD (549 aa)) form the PLA2c domain. N-linked (GlcNAc...) asparagine glycans are attached at residues asparagine 56, asparagine 95, asparagine 164, asparagine 220, asparagine 283, asparagine 351, asparagine 390, asparagine 443, asparagine 456, asparagine 462, asparagine 493, asparagine 514, asparagine 542, asparagine 566, and asparagine 583. Asparagine 606 carries the GPI-like-anchor amidated asparagine lipid modification. A propeptide spans 607–630 (AAYTQGVTWLVGILAVGVAMGMTA) (removed in mature form).

This sequence belongs to the lysophospholipase family. The GPI-like anchor contains a phosphoceramide lipid group.

It is found in the cell membrane. The catalysed reaction is a 1-acyl-sn-glycero-3-phosphocholine + H2O = sn-glycerol 3-phosphocholine + a fatty acid + H(+). In terms of biological role, catalyzes the release of fatty acids from lysophospholipids. The polypeptide is Lysophospholipase 3 (plb3) (Aspergillus fumigatus (strain CBS 144.89 / FGSC A1163 / CEA10) (Neosartorya fumigata)).